The chain runs to 164 residues: NADH-quinone oxidoreductase subunit C (164 aa).

This sequence belongs to the complex I 30 kDa subunit family. NDH-1 is composed of 14 different subunits. Subunits NuoB, C, D, E, F, and G constitute the peripheral sector of the complex.

Its subcellular location is the cell inner membrane. The catalysed reaction is a quinone + NADH + 5 H(+)(in) = a quinol + NAD(+) + 4 H(+)(out). Its function is as follows. NDH-1 shuttles electrons from NADH, via FMN and iron-sulfur (Fe-S) centers, to quinones in the respiratory chain. The immediate electron acceptor for the enzyme in this species is believed to be ubiquinone. Couples the redox reaction to proton translocation (for every two electrons transferred, four hydrogen ions are translocated across the cytoplasmic membrane), and thus conserves the redox energy in a proton gradient. This is NADH-quinone oxidoreductase subunit C from Geotalea uraniireducens (strain Rf4) (Geobacter uraniireducens).